The primary structure comprises 678 residues: MRILSYGIVILSLLVFSFIEFGVHARPVVLVLSNDDLNSGGDDNGVGESSDFDEFGESEPKSEEELDPGSWRSIFEPDDSTVQAASPQYYSGLKKILSAASEGNFRLMEEAVDEIEAASSAGDPHAQSIMGFVYGIGMMREKSKSKSFLHHNFAAAGGNMQSKMALAFTYLRQDMHDKAVQLYAELAETAVNSFLISKDSPVVEPTRIHSGTEENKGALRKSRGEEDEDFQILEYQAQKGNANAMYKIGLFYYFGLRGLRRDHTKALHWFLKAVDKGEPRSMELLGEIYARGAGVERNYTKALEWLTLAAKEGLYSAFNGIGYLYVKGYGVDKKNYTKAREYFEKAVDNEDPSGHYNLGVLYLKGIGVNRDVRQATKYFFVAANAGQPKAFYQLAKMFHTGVGLKKNLEMATSFYKLVAERGPWSSLSRWALEAYLKGDVGKALILYSRMAEMGYEVAQSNAAWILDKYGERSMCMGVSGFCTDKERHERAHSLWWRASEQGNEHAALLIGDAYYYGRGTERDFVRAAEAYMHAKSQSNAQAMFNLGYMHEHGQGLPFDLHLAKRYYDESLQSDAAARLPVTLALASLWLRRNYADTVLVRVVDSLPEVYPKVETWIENVVFEEGNATILTLFVCLITILYLRERQRRQVVVVADPVAADVAQPLDADVAQHLAAFPR.

An N-terminal signal peptide occupies residues 1–25 (MRILSYGIVILSLLVFSFIEFGVHA). A disordered region spans residues 40-71 (GGDDNGVGESSDFDEFGESEPKSEEELDPGSW). Sel1-like repeat units lie at residues 124–159 (PHAQ…AGGN), 242–277 (ANAM…VDKG), 279–313 (PRSM…AKEG), 317–349 (AFNG…AVDN), 353–386 (SGHY…ANAG), 388–422 (PKAF…AERG), 506–537 (AALL…AKSQ), and 540–568 (AQAM…RYYD). Residues asparagine 298 and asparagine 335 are each glycosylated (N-linked (GlcNAc...) asparagine). The chain crosses the membrane as a helical span at residues 620 to 640 (VVFEEGNATILTLFVCLITIL).

The protein belongs to the sel-1 family. As to quaternary structure, interacts with OS9.

The protein resides in the endoplasmic reticulum membrane. Functionally, component of the endoplasmic reticulum (ER) quality control system called ER-associated degradation (ERAD) and involved in ubiquitin-dependent degradation of misfolded endoplasmic reticulum proteins. Functions as an ERAD substrate-recruiting factor that recognizes misfolded proteins for the HRD1 E3 ubiquitin ligase complex. Targets the misfolded LRR receptor kinase BRI1. The sequence is that of ERAD-associated E3 ubiquitin-protein ligase component HRD3A from Arabidopsis thaliana (Mouse-ear cress).